The primary structure comprises 70 residues: Large ribosomal subunit protein bL31 (70 aa).

4 residues coordinate Zn(2+): C16, C18, C38, and C41.

Belongs to the bacterial ribosomal protein bL31 family. Type A subfamily. Part of the 50S ribosomal subunit. The cofactor is Zn(2+).

Binds the 23S rRNA. The protein is Large ribosomal subunit protein bL31 of Bifidobacterium longum (strain DJO10A).